A 366-amino-acid polypeptide reads, in one-letter code: Gelsolin-like protein 2 (366 aa).

Gelsolin-like repeat units follow at residues 55–139 (NFKV…DLFL), 177–252 (KHIV…HEFY), and 286–327 (KSTV…AQEK). The segment at 100–116 (KSTQDEYCVAAYKTVEL) is actin binding. The tract at residues 104-107 (DEYC) is actin-actin interfilament contact point.

The protein belongs to the villin/gelsolin family. Interacts with actin monomers and filaments. As to expression, expressed in circular and longitudinal muscle, pseudohearts, pharynx and gizzard. Not expressed in seminal vesicles.

The protein localises to the cytoplasm. Its subcellular location is the cytoskeleton. In terms of biological role, calcium-regulated protein that binds to the plus (or barbed) ends of actin monomers or filaments, preventing monomer exchange (end-blocking or capping). Can promote the assembly of monomers into filaments (nucleation) as well as sever existing filaments. The polypeptide is Gelsolin-like protein 2 (Lumbricus terrestris (Common earthworm)).